Reading from the N-terminus, the 444-residue chain is Gamma-glutamyl phosphate reductase (444 aa).

It belongs to the gamma-glutamyl phosphate reductase family.

Its subcellular location is the cytoplasm. It carries out the reaction L-glutamate 5-semialdehyde + phosphate + NADP(+) = L-glutamyl 5-phosphate + NADPH + H(+). The protein operates within amino-acid biosynthesis; L-proline biosynthesis; L-glutamate 5-semialdehyde from L-glutamate: step 2/2. Functionally, catalyzes the NADPH-dependent reduction of L-glutamate 5-phosphate into L-glutamate 5-semialdehyde and phosphate. The product spontaneously undergoes cyclization to form 1-pyrroline-5-carboxylate. In Albidiferax ferrireducens (strain ATCC BAA-621 / DSM 15236 / T118) (Rhodoferax ferrireducens), this protein is Gamma-glutamyl phosphate reductase.